The primary structure comprises 149 residues: Large ribosomal subunit protein bL9 (149 aa).

Belongs to the bacterial ribosomal protein bL9 family.

In terms of biological role, binds to the 23S rRNA. The chain is Large ribosomal subunit protein bL9 from Synechococcus sp. (strain JA-2-3B'a(2-13)) (Cyanobacteria bacterium Yellowstone B-Prime).